The sequence spans 428 residues: Tyrosine--tRNA ligase (428 aa).

Position 41 (Tyr41) interacts with L-tyrosine. A 'HIGH' region motif is present at residues 46-55 (PTADSLHLGH). L-tyrosine is bound by residues Tyr179 and Gln183. Residues 239–243 (KFGKT) carry the 'KMSKS' region motif. Lys242 is an ATP binding site. Positions 361–418 (ADLMQALVDSELQPSRGQARKTIASNAVTINGEKQSDPEYFFQDSDILFGRYTLLRRG) constitute an S4 RNA-binding domain.

This sequence belongs to the class-I aminoacyl-tRNA synthetase family. TyrS type 1 subfamily. Homodimer.

The protein localises to the cytoplasm. It carries out the reaction tRNA(Tyr) + L-tyrosine + ATP = L-tyrosyl-tRNA(Tyr) + AMP + diphosphate + H(+). Its function is as follows. Catalyzes the attachment of tyrosine to tRNA(Tyr) in a two-step reaction: tyrosine is first activated by ATP to form Tyr-AMP and then transferred to the acceptor end of tRNA(Tyr). The polypeptide is Tyrosine--tRNA ligase (Citrobacter koseri (strain ATCC BAA-895 / CDC 4225-83 / SGSC4696)).